Consider the following 557-residue polypeptide: 2-succinyl-5-enolpyruvyl-6-hydroxy-3-cyclohexene-1-carboxylate synthase (557 aa).

It belongs to the TPP enzyme family. MenD subfamily. As to quaternary structure, homodimer. The cofactor is Mg(2+). Mn(2+) is required as a cofactor. It depends on thiamine diphosphate as a cofactor.

It catalyses the reaction isochorismate + 2-oxoglutarate + H(+) = 5-enolpyruvoyl-6-hydroxy-2-succinyl-cyclohex-3-ene-1-carboxylate + CO2. Its pathway is quinol/quinone metabolism; 1,4-dihydroxy-2-naphthoate biosynthesis; 1,4-dihydroxy-2-naphthoate from chorismate: step 2/7. It functions in the pathway quinol/quinone metabolism; menaquinone biosynthesis. Its function is as follows. Catalyzes the thiamine diphosphate-dependent decarboxylation of 2-oxoglutarate and the subsequent addition of the resulting succinic semialdehyde-thiamine pyrophosphate anion to isochorismate to yield 2-succinyl-5-enolpyruvyl-6-hydroxy-3-cyclohexene-1-carboxylate (SEPHCHC). This Serratia proteamaculans (strain 568) protein is 2-succinyl-5-enolpyruvyl-6-hydroxy-3-cyclohexene-1-carboxylate synthase.